Consider the following 296-residue polypeptide: N-acetylmuramic acid 6-phosphate etherase (296 aa).

One can recognise an SIS domain in the interval 54–217; sequence VIASFQQGGR…STTAMVGIGK (164 aa). Catalysis depends on Glu-82, which acts as the Proton donor. Glu-113 is a catalytic residue.

The protein belongs to the GCKR-like family. MurNAc-6-P etherase subfamily. In terms of assembly, homodimer.

It carries out the reaction N-acetyl-D-muramate 6-phosphate + H2O = N-acetyl-D-glucosamine 6-phosphate + (R)-lactate. It participates in amino-sugar metabolism; N-acetylmuramate degradation. Functionally, specifically catalyzes the cleavage of the D-lactyl ether substituent of MurNAc 6-phosphate, producing GlcNAc 6-phosphate and D-lactate. This chain is N-acetylmuramic acid 6-phosphate etherase, found in Shouchella clausii (strain KSM-K16) (Alkalihalobacillus clausii).